The sequence spans 470 residues: ATP synthase subunit beta (470 aa).

Residue 157–164 (GGAGVGKT) coordinates ATP.

This sequence belongs to the ATPase alpha/beta chains family. In terms of assembly, F-type ATPases have 2 components, CF(1) - the catalytic core - and CF(0) - the membrane proton channel. CF(1) has five subunits: alpha(3), beta(3), gamma(1), delta(1), epsilon(1). CF(0) has three main subunits: a(1), b(2) and c(9-12). The alpha and beta chains form an alternating ring which encloses part of the gamma chain. CF(1) is attached to CF(0) by a central stalk formed by the gamma and epsilon chains, while a peripheral stalk is formed by the delta and b chains.

The protein localises to the cell inner membrane. It carries out the reaction ATP + H2O + 4 H(+)(in) = ADP + phosphate + 5 H(+)(out). Produces ATP from ADP in the presence of a proton gradient across the membrane. The catalytic sites are hosted primarily by the beta subunits. The polypeptide is ATP synthase subunit beta (Geobacter metallireducens (strain ATCC 53774 / DSM 7210 / GS-15)).